The sequence spans 491 residues: Ketol-acid reductoisomerase (NADP(+)) (491 aa).

The KARI N-terminal Rossmann domain maps to Ala15–Ser208. Residues Cys45–Gln48, Arg68, Arg76, Ser78, and Asp108–Gln110 contribute to the NADP(+) site. His132 is a catalytic residue. Residue Gly158 coordinates NADP(+). 2 KARI C-terminal knotted domains span residues Ser209–Gln344 and Tyr345–Met484. Mg(2+) contacts are provided by Asp217, Glu221, Glu389, and Glu393. Position 414 (Ser414) interacts with substrate.

This sequence belongs to the ketol-acid reductoisomerase family. Mg(2+) serves as cofactor.

It catalyses the reaction (2R)-2,3-dihydroxy-3-methylbutanoate + NADP(+) = (2S)-2-acetolactate + NADPH + H(+). The catalysed reaction is (2R,3R)-2,3-dihydroxy-3-methylpentanoate + NADP(+) = (S)-2-ethyl-2-hydroxy-3-oxobutanoate + NADPH + H(+). It functions in the pathway amino-acid biosynthesis; L-isoleucine biosynthesis; L-isoleucine from 2-oxobutanoate: step 2/4. It participates in amino-acid biosynthesis; L-valine biosynthesis; L-valine from pyruvate: step 2/4. In terms of biological role, involved in the biosynthesis of branched-chain amino acids (BCAA). Catalyzes an alkyl-migration followed by a ketol-acid reduction of (S)-2-acetolactate (S2AL) to yield (R)-2,3-dihydroxy-isovalerate. In the isomerase reaction, S2AL is rearranged via a Mg-dependent methyl migration to produce 3-hydroxy-3-methyl-2-ketobutyrate (HMKB). In the reductase reaction, this 2-ketoacid undergoes a metal-dependent reduction by NADPH to yield (R)-2,3-dihydroxy-isovalerate. The chain is Ketol-acid reductoisomerase (NADP(+)) from Escherichia coli (strain ATCC 8739 / DSM 1576 / NBRC 3972 / NCIMB 8545 / WDCM 00012 / Crooks).